Here is a 301-residue protein sequence, read N- to C-terminus: tRNA pseudouridine synthase B (301 aa).

The active-site Nucleophile is the aspartate 38.

Belongs to the pseudouridine synthase TruB family. Type 1 subfamily.

It carries out the reaction uridine(55) in tRNA = pseudouridine(55) in tRNA. Functionally, responsible for synthesis of pseudouridine from uracil-55 in the psi GC loop of transfer RNAs. The polypeptide is tRNA pseudouridine synthase B (Limosilactobacillus reuteri (strain DSM 20016) (Lactobacillus reuteri)).